Consider the following 225-residue polypeptide: UPF0128 protein PH1314 (225 aa).

The protein belongs to the UPF0128 family.

This Pyrococcus horikoshii (strain ATCC 700860 / DSM 12428 / JCM 9974 / NBRC 100139 / OT-3) protein is UPF0128 protein PH1314.